Reading from the N-terminus, the 426-residue chain is Enolase (426 aa).

Residue glutamine 163 participates in (2R)-2-phosphoglycerate binding. Residue glutamate 205 is the Proton donor of the active site. Aspartate 242, glutamate 286, and aspartate 313 together coordinate Mg(2+). (2R)-2-phosphoglycerate-binding residues include lysine 338, arginine 367, serine 368, and lysine 389. Lysine 338 functions as the Proton acceptor in the catalytic mechanism.

It belongs to the enolase family. Mg(2+) serves as cofactor.

The protein resides in the cytoplasm. It localises to the secreted. The protein localises to the cell surface. It carries out the reaction (2R)-2-phosphoglycerate = phosphoenolpyruvate + H2O. Its pathway is carbohydrate degradation; glycolysis; pyruvate from D-glyceraldehyde 3-phosphate: step 4/5. Catalyzes the reversible conversion of 2-phosphoglycerate (2-PG) into phosphoenolpyruvate (PEP). It is essential for the degradation of carbohydrates via glycolysis. In Helicobacter pylori (strain ATCC 700392 / 26695) (Campylobacter pylori), this protein is Enolase.